The chain runs to 317 residues: UDP-3-O-acylglucosamine N-acyltransferase (317 aa).

His-229 serves as the catalytic Proton acceptor.

It belongs to the transferase hexapeptide repeat family. LpxD subfamily. In terms of assembly, homotrimer.

It catalyses the reaction a UDP-3-O-[(3R)-3-hydroxyacyl]-alpha-D-glucosamine + a (3R)-hydroxyacyl-[ACP] = a UDP-2-N,3-O-bis[(3R)-3-hydroxyacyl]-alpha-D-glucosamine + holo-[ACP] + H(+). It functions in the pathway bacterial outer membrane biogenesis; LPS lipid A biosynthesis. In terms of biological role, catalyzes the N-acylation of UDP-3-O-acylglucosamine using 3-hydroxyacyl-ACP as the acyl donor. Is involved in the biosynthesis of lipid A, a phosphorylated glycolipid that anchors the lipopolysaccharide to the outer membrane of the cell. This chain is UDP-3-O-acylglucosamine N-acyltransferase, found in Campylobacter curvus (strain 525.92).